The following is a 220-amino-acid chain: MADS-box protein AGL24 (220 aa).

The 61-residue stretch at 1–61 folds into the MADS-box domain; that stretch reads MAREKIRIKK…GKLFEFSSSR (61 aa). One can recognise a K-box domain in the interval 87–177; sequence LRLENCNLSR…RDKLETLERA (91 aa). Positions 190–200 are enriched in polar residues; that stretch reads SVTTNVSSYDS. Positions 190–220 are disordered; that stretch reads SVTTNVSSYDSGTPLEDDSDTSLKLGLPSWE.

Interacts with IMK3/MRLK. Forms a homodimer and heterodimer with SOC1, AP1 and SVP through MADS-box domain. Interacts with the SEU-LUG corepressor complex when complexed to AP1. Interacts with AGL15 and AGL16. Post-translationally, phosphorylated by IMK3. Induced by vernalization. Mostly expressed in shoot apical meristems, including floral meristems. Also detected in stems, seedlings, leaves, flowers and siliques, and, to a lower extent, in roots.

The protein localises to the nucleus. It localises to the cytoplasm. Functionally, transcription activator that mediates floral transition in response to vernalization. Promotes inflorescence fate in apical meristems. Acts in a dosage-dependent manner. Probably involved in the transduction of RLK-mediated signaling (e.g. IMK3 pathway). Together with AP1 and SVP, controls the identity of the floral meristem and regulates expression of class B, C and E genes. When associated with SOC1, mediates effect of gibberellins on flowering under short-day conditions, and regulates the expression of LEAFY (LFY), which links floral induction and floral development. Confers inflorescence characteristics to floral primordia and early flowering. This Arabidopsis thaliana (Mouse-ear cress) protein is MADS-box protein AGL24 (AGL24).